The chain runs to 1038 residues: Subtilisin-like protease SBT6.1 (1038 aa).

Residues 1–30 (MKVLGEASSYPYRSCIIVVFLSVSLFWLRP) form the signal peptide. Positions 31–181 (STYHPQQQNL…TTLNWSRHLL (151 aa)) are cleaved as a propeptide — removed in mature form. N-linked (GlcNAc...) asparagine glycosylation is found at Asn44, Asn52, Asn171, and Asn175. One can recognise a Peptidase S8 domain in the interval 175 to 473 (NWSRHLLAQK…VDLLESYEIL (299 aa)). Residues 182-1000 (AQKTQVTSMF…IDMPFLVPTR (819 aa)) are Lumenal-facing. Catalysis depends on Asp212, which acts as the Charge relay system. Asn230 is a glycosylation site (N-linked (GlcNAc...) asparagine). The active-site Charge relay system is the His243. Asn300 is a glycosylation site (N-linked (GlcNAc...) asparagine). The active-site Charge relay system is Ser409. N-linked (GlcNAc...) asparagine glycans are attached at residues Asn513, Asn579, Asn902, and Asn954. A helical membrane pass occupies residues 1001 to 1021 (WIVLAGVVASGVLVLLSIWRI). Topologically, residues 1022–1038 (RQKRGRRRRASGSNRLA) are cytoplasmic.

Belongs to the peptidase S8 family. As to quaternary structure, interacts with PME1 and PME5. In terms of tissue distribution, expressed in the vasculature of roots, cotyledons and leaves.

The protein resides in the golgi apparatus membrane. Its function is as follows. Serine protease that catalyzes the first step (site-1 cleavage) in the proteolytic activation of various factors, prior to site-2 cleavage. Part of a regulated intramembrane proteolysis (RIP) cascade. Cleaves BZIP17 and BZIP28 after the Arg-Arg-Ile-Leu (RRIL) motif. May cleave BZIP49 after the RRIL motif. Targets the membrane-associated BZIP17 factor, which functions as a stress sensor and transducer in a signaling pathway that resembles an ER stress response. Following salt stress, BZIP17 is cleaved by SBT6.1 (S1P) and S2P at the C-terminus and the N-terminal bZIP component is translocated to the nucleus, where it activates the expression of salt stress response genes. Cleaves the pectinesterases PME1 after the Arg-Arg-Leu-Met (RRLM) and Arg-Arg-Leu-Leu (RRLL) motifs, and PME5 after the Arg-Arg-Leu-Leu (RRLL) and Arg-Lys-Leu-Met (RKLM) motifs. This processing and C-terminus release occurs in the Golgi apparatus and is required for cell wall targeting of pectinesterases. Thus, SBT6.1 mediates the regulated release of mature pectinesterases from the Golgi. Cleaves the peptide growth factor RALF23 after the Arg-Arg-Ile-Leu (RRIL) motif. This processing is required for RALF23 function in the negative regulation of brassinolide (BL)-mediated signaling pathway (e.g. BL-induced hypocotyl elongation and branching limitation). This is Subtilisin-like protease SBT6.1 from Arabidopsis thaliana (Mouse-ear cress).